A 399-amino-acid chain; its full sequence is uncharacterized protein (399 aa).

Belongs to the AdoMet synthetase 2 family.

This is an uncharacterized protein from Streptococcus pyogenes serotype M1.